The chain runs to 194 residues: MTSINITESAQEHFAKLLAQQPEGTNIRVFVVNPGTQNAECGVSYCPPEAIEANDTELKFENLSAYVDELSLPFLEDADIDYVTDKMGSQLTLKAPNAKMRKVNDDAPLFERVEYAIQTQVNPQLAGHGGHVSLMEITEAGIAIVQFGGGCNGCSMVDVTLKEGIEKELLAQFEGELTAVKDLTEHDRGEHSYY.

The [4Fe-4S] cluster site is built by C151 and C154.

The protein belongs to the NfuA family. As to quaternary structure, homodimer. [4Fe-4S] cluster serves as cofactor.

Its function is as follows. Involved in iron-sulfur cluster biogenesis. Binds a 4Fe-4S cluster, can transfer this cluster to apoproteins, and thereby intervenes in the maturation of Fe/S proteins. Could also act as a scaffold/chaperone for damaged Fe/S proteins. This chain is Fe/S biogenesis protein NfuA, found in Aliivibrio salmonicida (strain LFI1238) (Vibrio salmonicida (strain LFI1238)).